Reading from the N-terminus, the 161-residue chain is Protein UXT homolog (161 aa).

Belongs to the UXT family.

The polypeptide is Protein UXT homolog (Dictyostelium discoideum (Social amoeba)).